A 31-amino-acid polypeptide reads, in one-letter code: U14-ctenitoxin-Co1a (31 aa).

Post-translationally, disulfide bonds are present. As to expression, expressed by the venom gland.

Its subcellular location is the secreted. Functionally, omega-agatoxins are antagonists of voltage-gated calcium channels (Cav). This chain is U14-ctenitoxin-Co1a, found in Ctenus ornatus (Brazilian spider).